A 182-amino-acid polypeptide reads, in one-letter code: Ribosome-recycling factor (182 aa).

It belongs to the RRF family.

It localises to the cytoplasm. Responsible for the release of ribosomes from messenger RNA at the termination of protein biosynthesis. May increase the efficiency of translation by recycling ribosomes from one round of translation to another. The polypeptide is Ribosome-recycling factor (Mycoplasma capricolum subsp. capricolum (strain California kid / ATCC 27343 / NCTC 10154)).